The primary structure comprises 949 residues: MAM domain-containing glycosylphosphatidylinositol anchor protein 2 (949 aa).

Residues 1-25 (MDLVYGLVWLLTVLLEGISGQGVYA) form the signal peptide. Ig-like domains are found at residues 27 to 127 (PTVR…IRVD) and 134 to 232 (PVVT…KMVS). Intrachain disulfides connect Cys62-Cys110 and Cys159-Cys216. Asn92, Asn213, and Asn237 each carry an N-linked (GlcNAc...) asparagine glycan. 4 Ig-like domains span residues 242-328 (PSIK…NIIV), 340-436 (PDPY…VNIS), 442-533 (PNLT…ALVQ), and 540-627 (PAVE…FLVT). 2 cysteine pairs are disulfide-bonded: Cys264/Cys310 and Cys359/Cys417. 5 N-linked (GlcNAc...) asparagine glycosylation sites follow: Asn434, Asn443, Asn504, Asn610, and Asn703. 2 disulfides stabilise this stretch: Cys465/Cys515 and Cys561/Cys611. In terms of domain architecture, Fibronectin type-III spans 638-738 (DTYNPVWQNR…TIRVIKYTGE (101 aa)). Residues 739–914 (FHCGFEDGNI…VSIAEGECAK (176 aa)) enclose the MAM domain. Residue Asp924 is the site of GPI-anchor amidated aspartate attachment. The propeptide at 925-949 (GAVGILVHIWLFPVIILISILSPRR) is removed in mature form.

Interacts (through the Ig-like domains) with NLGN2.

It localises to the cell membrane. Functionally, may be involved in cell-cell interactions. The sequence is that of MAM domain-containing glycosylphosphatidylinositol anchor protein 2 (Mdga2) from Mus musculus (Mouse).